Reading from the N-terminus, the 123-residue chain is Ribosome-binding factor A (123 aa).

This sequence belongs to the RbfA family. In terms of assembly, monomer. Binds 30S ribosomal subunits, but not 50S ribosomal subunits or 70S ribosomes.

It is found in the cytoplasm. Its function is as follows. One of several proteins that assist in the late maturation steps of the functional core of the 30S ribosomal subunit. Associates with free 30S ribosomal subunits (but not with 30S subunits that are part of 70S ribosomes or polysomes). Required for efficient processing of 16S rRNA. May interact with the 5'-terminal helix region of 16S rRNA. This is Ribosome-binding factor A from Neisseria meningitidis serogroup A / serotype 4A (strain DSM 15465 / Z2491).